Consider the following 78-residue polypeptide: Sec-independent protein translocase protein TatA (78 aa).

Residues 1 to 21 traverse the membrane as a helical segment; the sequence is MGSLSIWHWIVVLAVVLLLFG. The segment at 43–78 is disordered; that stretch reads LAEDDEPAKTPAAPPEAPRPLPHQTSSAAEAEKKPV. Positions 54 to 63 are enriched in pro residues; that stretch reads AAPPEAPRPL.

It belongs to the TatA/E family. As to quaternary structure, the Tat system comprises two distinct complexes: a TatABC complex, containing multiple copies of TatA, TatB and TatC subunits, and a separate TatA complex, containing only TatA subunits. Substrates initially bind to the TatABC complex, which probably triggers association of the separate TatA complex to form the active translocon.

It localises to the cell inner membrane. Part of the twin-arginine translocation (Tat) system that transports large folded proteins containing a characteristic twin-arginine motif in their signal peptide across membranes. TatA could form the protein-conducting channel of the Tat system. This is Sec-independent protein translocase protein TatA from Xanthobacter autotrophicus (strain ATCC BAA-1158 / Py2).